Consider the following 183-residue polypeptide: MITMDDIVREGNPILRKVAEPVELPLTDEDKQTLVDMLEFIKNSQDPEIAEKYGLRPGVGLAAPQIGISKRLFAIHATDENGNLYSMGIANPKVVSHSVETNELENGEGCLSVDRDVPGLVPRRARLTITGVDHEGNDVRMRLRGYIAIVFQHELDHLDGIMFYDRIEGLEDPFKKPLPGFAL.

C110 and H153 together coordinate Fe cation. The active site involves E154. H157 lines the Fe cation pocket.

Belongs to the polypeptide deformylase family. The cofactor is Fe(2+).

It carries out the reaction N-terminal N-formyl-L-methionyl-[peptide] + H2O = N-terminal L-methionyl-[peptide] + formate. Functionally, removes the formyl group from the N-terminal Met of newly synthesized proteins. Requires at least a dipeptide for an efficient rate of reaction. N-terminal L-methionine is a prerequisite for activity but the enzyme has broad specificity at other positions. This chain is Peptide deformylase, found in Shouchella clausii (strain KSM-K16) (Alkalihalobacillus clausii).